A 154-amino-acid chain; its full sequence is Anti-sigma-E factor RseA (154 aa).

At threonine 39 the chain carries Phosphothreonine; by PknB. Zn(2+) contacts are provided by histidine 66, cysteine 70, and cysteine 73. Residues 104 to 154 (SEIPRCPPEGPSKGSSGGSSQGPPDGAAAGFGDRFADGDGGNRGRQSRVRR) form a disordered region. Low complexity predominate over residues 124 to 136 (QGPPDGAAAGFGD).

It belongs to the zinc-associated anti-sigma factor (ZAS) superfamily. Interacts with cognate ECF RNA polymerase sigma factor SigE under reducing conditions; this inhibits the interaction of SigE with the RNA polymerase catalytic core. Zn(2+) is required as a cofactor. In terms of processing, phosphorylated by PknB on Thr-39; can be dephosphorylated (at least in vitro) by PstP. Phosphorylation is the signal for subsequent degradation by the ClpC1-ClpP2 complex. Degraded following vancomycin treatment (surface stress) by a ClpC1-ClpP2 complex.

It localises to the cytoplasm. Functionally, an anti-sigma factor for extracytoplasmic function (ECF) sigma factor SigE. ECF sigma factors are held in an inactive form by an anti-sigma factor. The protein is Anti-sigma-E factor RseA (rseA) of Mycobacterium tuberculosis (strain ATCC 25618 / H37Rv).